We begin with the raw amino-acid sequence, 352 residues long: Photosystem II D2 protein (352 aa).

An N-acetylthreonine modification is found at Thr2. The residue at position 2 (Thr2) is a Phosphothreonine. Residues 40–60 form a helical membrane-spanning segment; sequence CAYFALGGWLTGTTFVTSWYT. Chlorophyll a is bound at residue His117. A helical transmembrane segment spans residues 124–140; sequence GFMLRQFEIARSVNLRP. Positions 129 and 142 each coordinate pheophytin a. The helical transmembrane segment at 152–165 threads the bilayer; sequence VFVSVFLIYPLGQS. Chlorophyll a is bound at residue His197. A helical transmembrane segment spans residues 207 to 227; that stretch reads AALLCAIHGATVENTLFEDGD. A plastoquinone is bound by residues His214 and Phe261. His214 lines the Fe cation pocket. His268 serves as a coordination point for Fe cation. Residues 278–294 traverse the membrane as a helical segment; that stretch reads GLWMSAIGVVGLALNLR.

It belongs to the reaction center PufL/M/PsbA/D family. As to quaternary structure, PSII is composed of 1 copy each of membrane proteins PsbA, PsbB, PsbC, PsbD, PsbE, PsbF, PsbH, PsbI, PsbJ, PsbK, PsbL, PsbM, PsbT, PsbX, PsbY, PsbZ, Psb30/Ycf12, at least 3 peripheral proteins of the oxygen-evolving complex and a large number of cofactors. It forms dimeric complexes. The cofactor is The D1/D2 heterodimer binds P680, chlorophylls that are the primary electron donor of PSII, and subsequent electron acceptors. It shares a non-heme iron and each subunit binds pheophytin, quinone, additional chlorophylls, carotenoids and lipids. There is also a Cl(-1) ion associated with D1 and D2, which is required for oxygen evolution. The PSII complex binds additional chlorophylls, carotenoids and specific lipids.. In terms of processing, phosphorylated in vitro.

The protein resides in the plastid. It localises to the chloroplast thylakoid membrane. The catalysed reaction is 2 a plastoquinone + 4 hnu + 2 H2O = 2 a plastoquinol + O2. Functionally, photosystem II (PSII) is a light-driven water:plastoquinone oxidoreductase that uses light energy to abstract electrons from H(2)O, generating O(2) and a proton gradient subsequently used for ATP formation. It consists of a core antenna complex that captures photons, and an electron transfer chain that converts photonic excitation into a charge separation. The D1/D2 (PsbA/PsbD) reaction center heterodimer binds P680, the primary electron donor of PSII as well as several subsequent electron acceptors. D2 is needed for assembly of a stable PSII complex. The protein is Photosystem II D2 protein of Chlamydomonas reinhardtii (Chlamydomonas smithii).